Reading from the N-terminus, the 41-residue chain is Histone H2B.3, sperm (41 aa).

Positions 1–41 are disordered; sequence MPRSPSKSSPKKGSPRKASPKRGGKGAKRAGKGGRRRTVVK. 4 short sequence motifs (SPKK motif) span residues 4–7, 9–12, 14–17, and 19–22; these read SPSK, SPKK, SPRK, and SPKR. Basic residues predominate over residues 9-41; the sequence is SPKKGSPRKASPKRGGKGAKRAGKGGRRRTVVK. Phosphoserine occurs at positions 14 and 19.

This sequence belongs to the histone H2B family. The nucleosome is a histone octamer containing two molecules each of H2A, H2B, H3 and H4 assembled in one H3-H4 heterotetramer and two H2A-H2B heterodimers. The octamer wraps approximately 147 bp of DNA. In terms of processing, monoubiquitination gives a specific tag for epigenetic transcriptional activation and is also prerequisite for histone H3 'Lys-4' and 'Lys-79' methylation. Phosphorylated on SPKK motifs 3 and 4; which may regulate DNA binding. Dephosphorylated during maturation of spermatids to mature sperm and rephosphorylated at fertilization.

It is found in the nucleus. Its subcellular location is the chromosome. Functionally, core component of nucleosome. Nucleosomes wrap and compact DNA into chromatin, limiting DNA accessibility to the cellular machineries which require DNA as a template. Histones thereby play a central role in transcription regulation, DNA repair, DNA replication and chromosomal stability. DNA accessibility is regulated via a complex set of post-translational modifications of histones, also called histone code, and nucleosome remodeling. This chain is Histone H2B.3, sperm, found in Echinus esculentus (Sea urchin).